The following is a 202-amino-acid chain: Dephospho-CoA kinase (202 aa).

The 197-residue stretch at 6-202 (KVSITGDLSS…EYFYALKGAL (197 aa)) folds into the DPCK domain. 14–19 (SSGKTE) is a binding site for ATP.

The protein belongs to the CoaE family.

Its subcellular location is the cytoplasm. It carries out the reaction 3'-dephospho-CoA + ATP = ADP + CoA + H(+). It participates in cofactor biosynthesis; coenzyme A biosynthesis; CoA from (R)-pantothenate: step 5/5. Functionally, catalyzes the phosphorylation of the 3'-hydroxyl group of dephosphocoenzyme A to form coenzyme A. This Chlamydia abortus (strain DSM 27085 / S26/3) (Chlamydophila abortus) protein is Dephospho-CoA kinase.